The primary structure comprises 526 residues: ESX-1 secretion-associated protein EspB (526 aa).

Over residues 1-23 (MSEELKYELPGLERKAHECESTR) the composition is skewed to basic and acidic residues. Disordered regions lie at residues 1-35 (MSEELKYELPGLERKAHECESTRPEGPGDATKPDE), 91-110 (RQMNGSDAPPPAAEAVVPDM), and 271-526 (QIQE…GKQQ). Over residues 303 to 328 (GGPGGPGSGSGGGSGGGASGGSGGGT) the composition is skewed to gly residues. A compositionally biased stretch (low complexity) spans 335–362 (PSTDPSMSPMSTNSAGEEQSSGSPSSGG). Positions 363–387 (SSSGGSPSGGSPSGGGAPSSGGMPE) are enriched in gly residues. Positions 393 to 405 (DMPGGPDIPGLDD) are enriched in low complexity. Positions 413–429 (AGGGGGGGVGGGGGGGM) are enriched in gly residues. Residues 430 to 440 (PAAPLGPAVGA) are compositionally biased toward low complexity. Over residues 451-484 (RGGGVGVPTGTGGGAGGMMGGGMGGMGAGHGQGQ) the composition is skewed to gly residues. Basic and acidic residues predominate over residues 485–508 (GKEKKRDPKLAPDEDLYTEDRAHS).

It belongs to the EspB family.

The protein localises to the secreted. Functionally, involved in DNA conjugation, at least in the recipient strain. This is ESX-1 secretion-associated protein EspB from Mycolicibacterium smegmatis (strain MKD8) (Mycobacterium smegmatis).